The chain runs to 417 residues: MYYLKNTNFWMFGLFFFFYFFIMGAYFPFFPIWLHDINHISKSDTGIIFAAISLFSLLFQPLFGLLSDKLGLRKYLLWIITGMLVMFAPFFIFIFGPLLQYNILVGSIVGGIYLGFCFNAGAPAVEAFIEKVSRRSNFEFGRARMFGCVGWALCASIVGIMFTINNQFVFWLGSGCALILAVLLFFAKTDAPSSATVANAVGANHSAFSLKLALELFRQPKLWFLSLYVIGVSCTYDVFDQQFANFFTSFFATGEQGTRVFGYVTTMGELLNASIMFFAPLIINRIGGKNALLLAGTIMSVRIIGSSFATSALEVVILKTLHMFEVPFLLVGCFKYITSQFEVRFSATIYLVCFCFFKQLAMIFMSVLAGNMYESIGFQGAYLVLGLVALGFTLISVFTLSGPGPLSLLRRQVNEVA.

Met1 carries the post-translational modification N-formylmethionine; partial. Residues Met1–Thr7 lie on the Cytoplasmic side of the membrane. Residues Asn8–Leu34 form a helical membrane-spanning segment. The Periplasmic portion of the chain corresponds to His35 to Ser41. The helical transmembrane segment at Lys42–Leu70 threads the bilayer. Topologically, residues Gly71–Lys74 are cytoplasmic. A helical transmembrane segment spans residues Tyr75–Gln100. Residues Tyr101–Leu104 lie on the Periplasmic side of the membrane. A helical transmembrane segment spans residues Val105 to Ile129. Over Glu130–Phe140 the chain is Cytoplasmic. A helical membrane pass occupies residues Gly141–Thr163. Residues Ile164–Asn166 lie on the Periplasmic side of the membrane. A helical membrane pass occupies residues Gln167–Phe186. Topologically, residues Ala187–Pro220 are cytoplasmic. A helical membrane pass occupies residues Lys221–Ser249. Residues Phe250 to Thr253 lie on the Periplasmic side of the membrane. Residues Gly254 to Phe278 form a helical membrane-spanning segment. Over Ala279–Gly288 the chain is Cytoplasmic. A helical transmembrane segment spans residues Lys289–Phe308. Topologically, residues Ala309–Ser311 are periplasmic. Residues Ala312 to Phe334 form a helical membrane-spanning segment. Residues Lys335–Ser346 are Cytoplasmic-facing. A helical membrane pass occupies residues Ala347 to Glu374. The Periplasmic segment spans residues Ser375–Gly377. Residues Phe378–Phe398 form a helical membrane-spanning segment. The Cytoplasmic segment spans residues Thr399–Ala417.

In terms of assembly, monomer.

It is found in the cell inner membrane. It catalyses the reaction lactose(in) + H(+)(in) = lactose(out) + H(+)(out). It carries out the reaction melibiose(in) + H(+)(in) = melibiose(out) + H(+)(out). With respect to regulation, inhibited by the proton ionophore carbonyl cyanide m-chlorophenylhydrazone (CCCP). In terms of biological role, responsible for transport of beta-galactosides into the cell, with the concomitant import of a proton (symport system). Can transport lactose, melibiose, the synthetic disaccharide lactulose or the analog methyl-1-thio-beta,D-galactopyranoside (TMG), but not sucrose or fructose. The substrate specificity is directed toward the galactopyranosyl moiety of the substrate. This chain is Lactose permease, found in Escherichia coli (strain K12).